The primary structure comprises 190 residues: Probable nicotinate-nucleotide adenylyltransferase (190 aa).

It belongs to the NadD family.

It catalyses the reaction nicotinate beta-D-ribonucleotide + ATP + H(+) = deamido-NAD(+) + diphosphate. Its pathway is cofactor biosynthesis; NAD(+) biosynthesis; deamido-NAD(+) from nicotinate D-ribonucleotide: step 1/1. In terms of biological role, catalyzes the reversible adenylation of nicotinate mononucleotide (NaMN) to nicotinic acid adenine dinucleotide (NaAD). The polypeptide is Probable nicotinate-nucleotide adenylyltransferase (Frankia alni (strain DSM 45986 / CECT 9034 / ACN14a)).